Here is a 128-residue protein sequence, read N- to C-terminus: Early 3 14.7 kDa protein (128 aa).

The protein belongs to the adenoviridae E3_15 family. In terms of assembly, may bind to host IKBKG, OPTN and RRAGA.

It is found in the host cytoplasm. The protein resides in the host nucleus. In terms of biological role, may prevent Nf-kappaB activation by immune signals like Tumor necrosis factor, presumably by inhibiting NFKB1 dimer DNA-binding. May act directly at the TNF receptor to inhibit signaling. This chain is Early 3 14.7 kDa protein, found in Human adenovirus C serotype 2 (HAdV-2).